The sequence spans 87 residues: Protein OPG096 (87 aa).

The next 2 helical transmembrane spans lie at 39–59 (PLIR…IFTV) and 67–87 (QMLL…YFIL).

It belongs to the orthopoxvirus OPG096 family. Interacts with OPG158.

It is found in the virion membrane. The protein localises to the host cytoplasm. The protein resides in the host endoplasmic reticulum membrane. Early protein involved in virion morphogenesis. Participates in the formation and elongation of crescent-shaped membrane precursors of immature virions in cytoplasmic factories. The chain is Protein OPG096 (OPG096) from Homo sapiens (Human).